The following is a 251-amino-acid chain: Large ribosomal subunit protein uL16m (251 aa).

The transit peptide at 1–29 (MWRLLSGARAPVLRATLSDSWAAPPARAG) directs the protein to the mitochondrion.

It belongs to the universal ribosomal protein uL16 family. Component of the mitochondrial ribosome large subunit (39S) which comprises a 16S rRNA and about 50 distinct proteins.

Its subcellular location is the mitochondrion. In Bos taurus (Bovine), this protein is Large ribosomal subunit protein uL16m (MRPL16).